Consider the following 180-residue polypeptide: Large ribosomal subunit protein uL5 (180 aa).

The protein belongs to the universal ribosomal protein uL5 family. Part of the 50S ribosomal subunit; part of the 5S rRNA/L5/L18/L25 subcomplex. Contacts the 5S rRNA and the P site tRNA. Forms a bridge to the 30S subunit in the 70S ribosome.

In terms of biological role, this is one of the proteins that bind and probably mediate the attachment of the 5S RNA into the large ribosomal subunit, where it forms part of the central protuberance. In the 70S ribosome it contacts protein S13 of the 30S subunit (bridge B1b), connecting the 2 subunits; this bridge is implicated in subunit movement. Contacts the P site tRNA; the 5S rRNA and some of its associated proteins might help stabilize positioning of ribosome-bound tRNAs. This chain is Large ribosomal subunit protein uL5, found in Limosilactobacillus reuteri (strain DSM 20016) (Lactobacillus reuteri).